A 241-amino-acid polypeptide reads, in one-letter code: Uridylate kinase (241 aa).

Position 15–18 (15–18 (KLSG)) interacts with ATP. The interval 23–28 (GSEGFG) is involved in allosteric activation by GTP. UMP is bound at residue Gly-57. ATP is bound by residues Gly-58 and Arg-62. UMP contacts are provided by residues Asp-77 and 138–145 (TGNPFFTT). Positions 165, 171, and 174 each coordinate ATP.

It belongs to the UMP kinase family. Homohexamer.

It is found in the cytoplasm. The catalysed reaction is UMP + ATP = UDP + ADP. The protein operates within pyrimidine metabolism; CTP biosynthesis via de novo pathway; UDP from UMP (UMPK route): step 1/1. With respect to regulation, allosterically activated by GTP. Inhibited by UTP. In terms of biological role, catalyzes the reversible phosphorylation of UMP to UDP. This Vibrio vulnificus (strain CMCP6) protein is Uridylate kinase.